The following is a 107-amino-acid chain: Protein Asterix (107 aa).

Positions 1–15 are enriched in polar residues; sequence MSHSHGNASSVNDPR. The tract at residues 1 to 25 is disordered; the sequence is MSHSHGNASSVNDPRQPSAAKPYIP. A helical membrane pass occupies residues 82-98; the sequence is ISMAMMFAIMGLVTNYL.

The protein belongs to the Asterix family.

The protein resides in the membrane. The chain is Protein Asterix from Arabidopsis thaliana (Mouse-ear cress).